The sequence spans 184 residues: Endoribonuclease YbeY (184 aa).

Zn(2+) is bound by residues histidine 146, histidine 150, and histidine 156.

Belongs to the endoribonuclease YbeY family. Zn(2+) serves as cofactor.

It is found in the cytoplasm. In terms of biological role, single strand-specific metallo-endoribonuclease involved in late-stage 70S ribosome quality control and in maturation of the 3' terminus of the 16S rRNA. This chain is Endoribonuclease YbeY, found in Nostoc sp. (strain PCC 7120 / SAG 25.82 / UTEX 2576).